The primary structure comprises 320 residues: Thioredoxin reductase (320 aa).

36–43 contacts FAD; it reads TGMEQGGQ. The cysteines at positions 136 and 139 are disulfide-linked. 287–296 contributes to the FAD binding site; it reads DVTDHVYRQA.

Belongs to the class-II pyridine nucleotide-disulfide oxidoreductase family. In terms of assembly, homodimer. FAD serves as cofactor.

Its subcellular location is the cytoplasm. The enzyme catalyses [thioredoxin]-dithiol + NADP(+) = [thioredoxin]-disulfide + NADPH + H(+). The sequence is that of Thioredoxin reductase (trxB) from Coxiella burnetii (strain RSA 493 / Nine Mile phase I).